Consider the following 244-residue polypeptide: Vesicle-associated membrane protein-associated protein SCS2 (244 aa).

Residue Ser2 is modified to N-acetylserine. Over 2–222 the chain is Cytoplasmic; sequence SAVEISPDVL…EAATVPAENE (221 aa). An MSP domain is found at 3–126; sequence AVEISPDVLV…ISKKIKVKYL (124 aa). Ser106 bears the Phosphoserine mark. The disordered stretch occupies residues 135 to 219; the sequence is QNQNIQENKE…QIKEAATVPA (85 aa). The segment covering 153-168 has biased composition (basic and acidic residues); that stretch reads SEPKEVPAVVNEKEVP. Over residues 199–211 the composition is skewed to polar residues; the sequence is QTSNSTPAPQNQI. The chain crosses the membrane as a helical; Anchor for type IV membrane protein span at residues 223–243; that stretch reads SSSMGIFILVALLILVLGWFY. Arg244 is a topological domain (lumenal).

It belongs to the VAMP-associated protein (VAP) (TC 9.B.17) family. As to quaternary structure, interacts with OPI1. Also interacts with PBI1. Interacts with EPO1.

The protein localises to the endoplasmic reticulum membrane. It is found in the nucleus membrane. Functionally, acts as an endoplasmic reticulum (ER) membrane anchor for cytoplasmic proteins via binding to the FFAT motif of targeted proteins. Regulates phospholipid biosynthesis by modulating the subcellular localization of the transcriptional repressor OPI1. Also contributes to the tethering of the ER to the plasma membrane. Allows interorganelle phosphatidylserine (PtdSer) transport via a process that involves the acceptor membrane complex PDR17-PDS2 that binds to PBI1 which in turn ligates to SCS2 and phosphatidic acid present in the donor membrane, forming a zone of apposition that facilitates PtdSer transfer. This chain is Vesicle-associated membrane protein-associated protein SCS2, found in Saccharomyces cerevisiae (strain ATCC 204508 / S288c) (Baker's yeast).